We begin with the raw amino-acid sequence, 101 residues long: Large ribosomal subunit protein bL21 (101 aa).

Belongs to the bacterial ribosomal protein bL21 family. In terms of assembly, part of the 50S ribosomal subunit. Contacts protein L20.

Its function is as follows. This protein binds to 23S rRNA in the presence of protein L20. The polypeptide is Large ribosomal subunit protein bL21 (Anaeromyxobacter dehalogenans (strain 2CP-1 / ATCC BAA-258)).